Consider the following 951-residue polypeptide: Valine--tRNA ligase (951 aa).

Residues 42–52 carry the 'HIGH' region motif; sequence PNVTGSLHMGH. The 'KMSKS' region signature appears at 554 to 558; the sequence is KMSKS. Lys557 provides a ligand contact to ATP. The stretch at 882 to 944 forms a coiled coil; the sequence is LINKDDELAR…AEAKAKLIEQ (63 aa).

This sequence belongs to the class-I aminoacyl-tRNA synthetase family. ValS type 1 subfamily. Monomer.

It localises to the cytoplasm. It carries out the reaction tRNA(Val) + L-valine + ATP = L-valyl-tRNA(Val) + AMP + diphosphate. Functionally, catalyzes the attachment of valine to tRNA(Val). As ValRS can inadvertently accommodate and process structurally similar amino acids such as threonine, to avoid such errors, it has a 'posttransfer' editing activity that hydrolyzes mischarged Thr-tRNA(Val) in a tRNA-dependent manner. The protein is Valine--tRNA ligase of Salmonella choleraesuis (strain SC-B67).